The chain runs to 157 residues: ABA-responsive protein ABR17 (157 aa).

Belongs to the BetVI family.

In Pisum sativum (Garden pea), this protein is ABA-responsive protein ABR17.